A 401-amino-acid chain; its full sequence is MSKEKIALAYSGGLDTSVMIKWLKDKYDAEIVAVTGNLGQEKEVENLEEKAIATGASSFAFLDLRKEFVESCIWPALKAGALYEDVYPLATALGRPLIAKALVDIALENNCTMLAHGCTGKGNDQVRFEVTFASLAPQLAVLAPLREWEFTSREAEIAYAMEHNIPVSATKKSPYSIDENIWGISIECGVLEDPMTPAPEDAYQITTSPEKAPDKAAVIDIEFEQGVPVALDGKAMEGLDLIVELNKVGAAHGVGRLDMVENRVVGIKSREIYEAPAATILHFAHRELERLTLEKSVFQYKKNVSQDYANLIYNGTWFSPMREALDGFIEATQKTVTGLVRVKLFKGSVTLLGRTSPWSLYNEDLATYTEADTFNHKAAEGFIHLYGLGLKTWSEVKANNS.

Residue 9–17 coordinates ATP; it reads AYSGGLDTS. An L-citrulline-binding site is contributed by Tyr-87. ATP is bound at residue Gly-117. L-aspartate is bound by residues Thr-119, Asn-123, and Asp-124. Asn-123 contributes to the L-citrulline binding site. L-citrulline is bound by residues Arg-127, Ser-176, Ser-185, Glu-261, and Tyr-273.

The protein belongs to the argininosuccinate synthase family. Type 1 subfamily. As to quaternary structure, homotetramer.

Its subcellular location is the cytoplasm. The catalysed reaction is L-citrulline + L-aspartate + ATP = 2-(N(omega)-L-arginino)succinate + AMP + diphosphate + H(+). The protein operates within amino-acid biosynthesis; L-arginine biosynthesis; L-arginine from L-ornithine and carbamoyl phosphate: step 2/3. The protein is Argininosuccinate synthase of Prosthecochloris aestuarii (strain DSM 271 / SK 413).